The chain runs to 548 residues: Chaperonin GroEL (548 aa).

ATP-binding positions include Thr-30–Pro-33, Lys-51, Asp-87–Thr-91, Gly-415, Asn-479–Ala-481, and Asp-495.

This sequence belongs to the chaperonin (HSP60) family. In terms of assembly, forms a cylinder of 14 subunits composed of two heptameric rings stacked back-to-back. Interacts with the co-chaperonin GroES.

The protein localises to the cytoplasm. The enzyme catalyses ATP + H2O + a folded polypeptide = ADP + phosphate + an unfolded polypeptide.. Together with its co-chaperonin GroES, plays an essential role in assisting protein folding. The GroEL-GroES system forms a nano-cage that allows encapsulation of the non-native substrate proteins and provides a physical environment optimized to promote and accelerate protein folding. This chain is Chaperonin GroEL, found in Klebsiella pneumoniae subsp. pneumoniae (strain ATCC 700721 / MGH 78578).